A 498-amino-acid polypeptide reads, in one-letter code: ATP synthase subunit beta, chloroplastic (498 aa).

172-179 (GGAGVGKT) is a binding site for ATP.

Belongs to the ATPase alpha/beta chains family. In terms of assembly, F-type ATPases have 2 components, CF(1) - the catalytic core - and CF(0) - the membrane proton channel. CF(1) has five subunits: alpha(3), beta(3), gamma(1), delta(1), epsilon(1). CF(0) has four main subunits: a(1), b(1), b'(1) and c(9-12).

It is found in the plastid. The protein localises to the chloroplast thylakoid membrane. It carries out the reaction ATP + H2O + 4 H(+)(in) = ADP + phosphate + 5 H(+)(out). Functionally, produces ATP from ADP in the presence of a proton gradient across the membrane. The catalytic sites are hosted primarily by the beta subunits. This chain is ATP synthase subunit beta, chloroplastic, found in Elaeis oleifera (American oil palm).